The following is a 404-amino-acid chain: O-methyltransferase GME11366 (404 aa).

S-adenosyl-L-methionine is bound by residues 237–238 (GG), Asp262, Arg301, and Arg302. His305 serves as the catalytic Proton acceptor.

Belongs to the class I-like SAM-binding methyltransferase superfamily. Cation-independent O-methyltransferase family.

It functions in the pathway secondary metabolite biosynthesis. In terms of biological role, O-methyltransferase; part of the gene cluster that mediates the biosynthesis of dibenzodioxocinones such as pestalotiollide B, a novel class of inhibitors against cholesterol ester transfer protein (CEPT). The biosynthesis initiates from condensation of acetate and malonate units catalyzed by the non-reducing PKS pks8/GME11356. Pks8/GME11356 lacks a thioesterase (TE) domain, which is important to the cyclizing of the third ring of atrochrysone carboxylic acid, and the esterase GME11355 might play the role of TE and catalyzes the cyclization reaction of the C ring. The lactamase-like protein GME11357 (or other beta-lactamases in Pestalotiopsis microspora) probably hydrolyzes the thioester bond between the ACP of pks8/GME11356 and the intermediate to release atrochrysone carboxylic acid, which is spontaneously dehydrates to form endocrocin anthrone. Endocrocin anthrone is further converted to emodin via the endocrocin intermediate. Emodin is then oxidized by several enzymes such as the Baeyer-Villiger oxidase GME11358, the oxidoreductase GME11367, the short chain dehydrogenase/reductase GME11373, as well as by other oxidoreductases from the cluster, to modify the A and C rings and open the B ring, and finally yield monodictyphenone. The prenyltransferase GME11375 may catalyze the addition reaction between the C5 side chains and the carbon bone of dibenzodioxocinones. The remaining biochemical reactions to the final product dibenzodioxocinones should be methylation catalyzed by methyltransferase GME11366 and reduction and lactonization reaction catalyzed by a series of oxidordeuctases. The sequence is that of O-methyltransferase GME11366 from Pestalotiopsis microspora.